An 847-amino-acid polypeptide reads, in one-letter code: Ras GTPase-activating protein 2 (847 aa).

The span at 1 to 18 shows a compositional bias: low complexity; the sequence is MAAAAPAAAALTEAPAVP. Positions 1–31 are disordered; it reads MAAAAPAAAALTEAPAVPGTAEPETGDEDSR. Alanine 2 is modified (N-acetylalanine). C2 domains are found at residues 19–137 and 148–288; these read GTAE…ETWF and VQGK…QAWY. The region spanning 371–588 is the Ras-GAP domain; that stretch reads NKLVPFITAV…TDVKKFLDEI (218 aa). The residue at position 554 (serine 554) is a Phosphoserine. In terms of domain architecture, PH spans 603-704; sequence VHLKEGEMYK…WIDMLCRVSR (102 aa). The Btk-type zinc-finger motif lies at 706–742; it reads NHNRLSSFHPSAYLNGNWLCCQETSEGTPGCKPCTAG. Residues histidine 714, cysteine 725, cysteine 726, and cysteine 736 each coordinate Zn(2+). A disordered region spans residues 819–847; the sequence is DEPHEKYRKKRSSSAKYGSKENPIVGKIS.

As to expression, widely expressed. Higher expression in brain, placenta, and kidney.

It localises to the cell membrane. Its function is as follows. Inhibitory regulator of the Ras-cyclic AMP pathway. May bind inositol tetrakisphosphate (IP4) and phospholipids. This is Ras GTPase-activating protein 2 (Rasa2) from Rattus norvegicus (Rat).